The sequence spans 421 residues: Serine--tRNA ligase (421 aa).

232–234 contributes to the L-serine binding site; sequence TAE. Position 262–264 (262–264) interacts with ATP; that stretch reads RSE. Residue glutamate 285 participates in L-serine binding. 349 to 352 contacts ATP; that stretch reads EVSS. An L-serine-binding site is contributed by serine 384.

Belongs to the class-II aminoacyl-tRNA synthetase family. Type-1 seryl-tRNA synthetase subfamily. In terms of assembly, homodimer. The tRNA molecule binds across the dimer.

The protein localises to the cytoplasm. It catalyses the reaction tRNA(Ser) + L-serine + ATP = L-seryl-tRNA(Ser) + AMP + diphosphate + H(+). It carries out the reaction tRNA(Sec) + L-serine + ATP = L-seryl-tRNA(Sec) + AMP + diphosphate + H(+). It participates in aminoacyl-tRNA biosynthesis; selenocysteinyl-tRNA(Sec) biosynthesis; L-seryl-tRNA(Sec) from L-serine and tRNA(Sec): step 1/1. Its function is as follows. Catalyzes the attachment of serine to tRNA(Ser). Is also able to aminoacylate tRNA(Sec) with serine, to form the misacylated tRNA L-seryl-tRNA(Sec), which will be further converted into selenocysteinyl-tRNA(Sec). In Mycoplasma mobile (strain ATCC 43663 / 163K / NCTC 11711) (Mesomycoplasma mobile), this protein is Serine--tRNA ligase.